Here is a 54-residue protein sequence, read N- to C-terminus: Large ribosomal subunit protein bL33 (54 aa).

It belongs to the bacterial ribosomal protein bL33 family.

This Parafrankia sp. (strain EAN1pec) protein is Large ribosomal subunit protein bL33.